We begin with the raw amino-acid sequence, 178 residues long: Protein GrpE (178 aa).

The disordered stretch occupies residues M1–V26.

This sequence belongs to the GrpE family. As to quaternary structure, homodimer.

The protein localises to the cytoplasm. Its function is as follows. Participates actively in the response to hyperosmotic and heat shock by preventing the aggregation of stress-denatured proteins, in association with DnaK and GrpE. It is the nucleotide exchange factor for DnaK and may function as a thermosensor. Unfolded proteins bind initially to DnaJ; upon interaction with the DnaJ-bound protein, DnaK hydrolyzes its bound ATP, resulting in the formation of a stable complex. GrpE releases ADP from DnaK; ATP binding to DnaK triggers the release of the substrate protein, thus completing the reaction cycle. Several rounds of ATP-dependent interactions between DnaJ, DnaK and GrpE are required for fully efficient folding. The sequence is that of Protein GrpE from Herminiimonas arsenicoxydans.